Reading from the N-terminus, the 454-residue chain is Exodeoxyribonuclease 7 large subunit (454 aa).

A compositionally biased stretch (low complexity) spans 337–352 (ANQRQQRASQRLRQQN). The disordered stretch occupies residues 337 to 359 (ANQRQQRASQRLRQQNPQPRIHR).

Belongs to the XseA family. As to quaternary structure, heterooligomer composed of large and small subunits.

Its subcellular location is the cytoplasm. The catalysed reaction is Exonucleolytic cleavage in either 5'- to 3'- or 3'- to 5'-direction to yield nucleoside 5'-phosphates.. Its function is as follows. Bidirectionally degrades single-stranded DNA into large acid-insoluble oligonucleotides, which are then degraded further into small acid-soluble oligonucleotides. The protein is Exodeoxyribonuclease 7 large subunit of Salmonella arizonae (strain ATCC BAA-731 / CDC346-86 / RSK2980).